Reading from the N-terminus, the 267-residue chain is Type II pantothenate kinase (267 aa).

6 to 13 (DAGGTLIK) lines the ATP pocket. Glutamate 70 serves as the catalytic Proton acceptor. ATP-binding positions include threonine 99, 121–125 (GGMIQ), tyrosine 137, and serine 225.

Belongs to the type II pantothenate kinase family. In terms of assembly, homodimer.

It is found in the cytoplasm. The enzyme catalyses (R)-pantothenate + ATP = (R)-4'-phosphopantothenate + ADP + H(+). Its pathway is cofactor biosynthesis; coenzyme A biosynthesis; CoA from (R)-pantothenate: step 1/5. Its function is as follows. Catalyzes the phosphorylation of pantothenate (Pan), the first step in CoA biosynthesis. The protein is Type II pantothenate kinase of Staphylococcus aureus (strain USA300).